The following is a 551-amino-acid chain: Crossover junction endonuclease EME1B (551 aa).

Disordered stretches follow at residues 1–55 (MNDH…PIFV) and 187–239 (TTLP…RLEK). The segment covering 37-51 (SDPTPQKQPPESSFT) has biased composition (polar residues). The span at 202-239 (SKEDKTSAMEEKKLRKEQERLEKAASKAEEAERKRLEK) shows a compositional bias: basic and acidic residues. The stretch at 203 to 253 (KEDKTSAMEEKKLRKEQERLEKAASKAEEAERKRLEKEKKKWEKGKLALKS) forms a coiled coil. Residues 287-484 (NPIERSIVWT…PSMKSLLKVY (198 aa)) form the ERCC4 domain.

Belongs to the EME1/MMS4 family. In terms of assembly, forms a heterodimer with MUS81. Mg(2+) is required as a cofactor. Requires Ca(2+) as cofactor.

The protein resides in the nucleus. Its function is as follows. Interacts with MUS81 to form a DNA structure-specific endonuclease with substrate preference for branched DNA structures with a 5'-end at the branch nick. Typical substrates include 3'-flap structures, D-loops, replication forks, nicked Holliday junctions and also intact Holliday junctions with a reduced efficiency. May be required in mitosis for the processing of stalled or collapsed replication fork intermediates. Plays a role in DNA repair and in genotoxic stress-induced homologous recombination (HR) in somatic cells. Mediates a subset of meiotic recombination events that are insensitive to crossover interference. This is Crossover junction endonuclease EME1B (EME1B) from Arabidopsis thaliana (Mouse-ear cress).